The chain runs to 637 residues: Chloride intracellular channel protein 6 (637 aa).

The interval 1–400 (MAETAEPEGG…EASEEGDPGQ (400 aa)) is disordered. Residues 35–63 (GPEASEGAAKAPSGEGAGAAAKAGATEEA) are compositionally biased toward low complexity. At Ser-39 the chain carries Phosphoserine. Basic and acidic residues predominate over residues 126-137 (CELRGEAAREAE). A compositionally biased stretch (low complexity) spans 138–152 (GQAAAPAAPGAQEEA). 15 consecutive repeat copies span residues 155-160 (GDSVDA), 161-166 (EGSIDA), 167-172 (GGSVDA), 173-178 (AGSVDA), 179-184 (GGSIDA), 185-190 (GGSMDA), 191-196 (GGSVDA), 197-202 (GGSIDT), 203-208 (GGSVDA), 209-214 (AGSVDA), 215-220 (GGSIDT), 221-226 (GRNVDA), 227-232 (GGSIDA), 233-238 (GGSVDA), and 239-244 (GGSMDA). Residues 155–244 (GDSVDAEGSI…SVDAGGSMDA (90 aa)) are 15 X 6 AA tandem repeat of [GEA]-[DGR]-[SN]-[VIM]-D-[AT]. Positions 247 to 256 (PAGGAHGAGG) are enriched in gly residues. A compositionally biased stretch (acidic residues) spans 305-314 (GSEDAAGEDG). Residues 315 to 332 (DQGRPQEETEQQAERQEP) are compositionally biased toward basic and acidic residues. Ser-348 and Ser-393 each carry phosphoserine. The G-site motif lies at 420-423 (CPFS). A helical membrane pass occupies residues 422–442 (FSQRLFMILWLKGVIFNVTTV). One can recognise a GST C-terminal domain in the interval 466–637 (DGDVKTDVNK…AYSDVAKRMK (172 aa)).

This sequence belongs to the chloride channel CLIC family. Monomer (soluble state). Interacts with dopamine receptors DRD2, DRD3 and DRD4. In terms of processing, phosphorylated. Expressed in brain, chorioretinal, lacrimal glands, submandibular glands, airway epithelium, kidney and gastric mucosa, where it is preferentially expressed in cells that secrete or transport water. In brain, it is highly expressed in choroid plexus. Not detected in pancreas, adrenal glands, heart, skeletal muscle, ileal mucosa, liver and lung.

The protein resides in the cytoplasm. It is found in the cell membrane. It catalyses the reaction chloride(in) = chloride(out). With respect to regulation, channel activity is redox- and pH-regulated. Inhibited by IAA-94. In terms of biological role, in the soluble state, catalyzes glutaredoxin-like thiol disulfide exchange reactions with reduced glutathione as electron donor. Can insert into membranes and form voltage-dependent chloride-selective channels. The channel opens upon membrane depolarization at positive voltages and closes at negative membrane voltages. May play a critical role in water-secreting cells, possibly through the regulation of chloride ion transport. The polypeptide is Chloride intracellular channel protein 6 (CLIC6) (Oryctolagus cuniculus (Rabbit)).